Reading from the N-terminus, the 234-residue chain is Sugar fermentation stimulation protein homolog (234 aa).

It belongs to the SfsA family.

In Shewanella baltica (strain OS223), this protein is Sugar fermentation stimulation protein homolog.